A 586-amino-acid polypeptide reads, in one-letter code: Envelope glycoprotein (586 aa).

Residues 1–22 form the signal peptide; it reads MNFNYHFIWSLVILSQISQVQA. Residues 23-526 are Extracellular-facing; sequence GFGDPREALA…TSFHGFLPYV (504 aa). N-linked (GlcNAc...) asparagine; by host glycans are attached at residues Asn120 and Asn237. The CXXC motif lies at 247–250; that stretch reads CWLC. 3 disulfide bridges follow: Cys247/Cys250, Cys247/Cys483, and Cys475/Cys482. Residues Asn264, Asn276, Asn291, Asn304, Asn318, Asn324, Asn339, and Asn357 are each glycosylated (N-linked (GlcNAc...) asparagine; by host). The segment at 398–418 is fusion peptide; sequence LIPLFVGLGITTAVSTGAAGL. Coiled-coil stretches lie at residues 419-469 and 479-515; these read GVSI…LLTA and QEKC…DNPF. The segment at 458–474 is immunosuppression; sequence LQNRRGLDLLTAEQGGI. The short motif at 475-483 is the CX6CC element; it reads CLALQEKCC. Asn487 carries N-linked (GlcNAc...) asparagine; by host glycosylation. Residues 527–547 traverse the membrane as a helical segment; it reads MPLLGPLLCLLLVLSFGPIIF. Residues 548 to 586 lie on the Cytoplasmic side of the membrane; that stretch reads NKLMTFIKHQIESIQAKPIQVHYHRLEQEDSGGSYLTLT. Positions 570–573 match the YXXL motif; contains endocytosis signal motif; it reads YHRL.

As to quaternary structure, the mature envelope protein (Env) consists of a trimer of SU-TM heterodimers attached by a labile interchain disulfide bond. Post-translationally, specific enzymatic cleavages in vivo yield mature proteins. Envelope glycoproteins are synthesized as an inactive precursor that is N-glycosylated and processed likely by host cell furin or by a furin-like protease in the Golgi to yield the mature SU and TM proteins. The cleavage site between SU and TM requires the minimal sequence [KR]-X-[KR]-R. The R-peptide is released from the C-terminus of the cytoplasmic tail of the TM protein upon particle formation as a result of proteolytic cleavage by the viral protease. Cleavage of this peptide is required for TM to become fusogenic. In terms of processing, the CXXC motif is highly conserved across a broad range of retroviral envelope proteins. It is thought to participate in the formation of a labile disulfide bond possibly with the CX6CC motif present in the transmembrane protein. Isomerization of the intersubunit disulfide bond to an SU intrachain disulfide bond is thought to occur upon receptor recognition in order to allow membrane fusion.

It localises to the virion membrane. Its subcellular location is the host cell membrane. Functionally, the surface protein (SU) attaches the virus to the host cell by binding to its receptor. This interaction triggers the refolding of the transmembrane protein (TM) and is thought to activate its fusogenic potential by unmasking its fusion peptide. Fusion occurs at the host cell plasma membrane. The transmembrane protein (TM) acts as a class I viral fusion protein. Under the current model, the protein has at least 3 conformational states: pre-fusion native state, pre-hairpin intermediate state, and post-fusion hairpin state. During viral and target cell membrane fusion, the coiled coil regions (heptad repeats) assume a trimer-of-hairpins structure, positioning the fusion peptide in close proximity to the C-terminal region of the ectodomain. The formation of this structure appears to drive apposition and subsequent fusion of viral and target cell membranes. Membranes fusion leads to delivery of the nucleocapsid into the cytoplasm. This is Envelope glycoprotein (env) from Mason-Pfizer monkey virus (MPMV).